A 191-amino-acid chain; its full sequence is MYQDLIRSELTEAADVLQKFLSDDHNIAQIEAAAKLIADSFKQGGKVLSCGNGGSHCDAMHFAEELTGRYRENRPGYPGIAISDPSHLSCVSNDFGYDYVFSRYVEAVGAKGDVLFGLSTSGNSGNILKAIEAAKAKGMKTIALTGKDGGKMAGLADVEIRVPHFGYADRIQEVHIKIIHIIIQLIEKEMA.

One can recognise an SIS domain in the interval 37–191 (IADSFKQGGK…IIQLIEKEMA (155 aa)). Residue 52-54 (NGG) coordinates substrate. Positions 61 and 65 each coordinate Zn(2+). Substrate contacts are provided by residues Glu-65, 93–94 (ND), 119–121 (STS), Ser-124, and Gln-172. Positions 172 and 180 each coordinate Zn(2+).

It belongs to the SIS family. GmhA subfamily. Homotetramer. Zn(2+) is required as a cofactor.

Its subcellular location is the cytoplasm. It catalyses the reaction 2 D-sedoheptulose 7-phosphate = D-glycero-alpha-D-manno-heptose 7-phosphate + D-glycero-beta-D-manno-heptose 7-phosphate. It functions in the pathway carbohydrate biosynthesis; D-glycero-D-manno-heptose 7-phosphate biosynthesis; D-glycero-alpha-D-manno-heptose 7-phosphate and D-glycero-beta-D-manno-heptose 7-phosphate from sedoheptulose 7-phosphate: step 1/1. It participates in bacterial outer membrane biogenesis; LPS core biosynthesis. In terms of biological role, catalyzes the isomerization of sedoheptulose 7-phosphate in D-glycero-D-manno-heptose 7-phosphate. The protein is Phosphoheptose isomerase (gmhA) of Vibrio cholerae serotype O1 (strain ATCC 39315 / El Tor Inaba N16961).